We begin with the raw amino-acid sequence, 303 residues long: Phosphoribosylaminoimidazole-succinocarboxamide synthase (303 aa).

This sequence belongs to the SAICAR synthetase family.

The enzyme catalyses 5-amino-1-(5-phospho-D-ribosyl)imidazole-4-carboxylate + L-aspartate + ATP = (2S)-2-[5-amino-1-(5-phospho-beta-D-ribosyl)imidazole-4-carboxamido]succinate + ADP + phosphate + 2 H(+). The protein operates within purine metabolism; IMP biosynthesis via de novo pathway; 5-amino-1-(5-phospho-D-ribosyl)imidazole-4-carboxamide from 5-amino-1-(5-phospho-D-ribosyl)imidazole-4-carboxylate: step 1/2. This chain is Phosphoribosylaminoimidazole-succinocarboxamide synthase (ADE1), found in Pichia angusta (Yeast).